The sequence spans 432 residues: Phosphomevalonate kinase (432 aa).

ATP contacts are provided by residues K10 and 142–148 (VEKTGLG).

The protein belongs to the GHMP kinase family. Mevalonate kinase subfamily.

Its subcellular location is the cytoplasm. The catalysed reaction is (R)-5-phosphomevalonate + ATP = (R)-5-diphosphomevalonate + ADP. It participates in isoprenoid biosynthesis; isopentenyl diphosphate biosynthesis via mevalonate pathway; isopentenyl diphosphate from (R)-mevalonate: step 2/3. Functionally, phosphomevalonate kinase; part of the second module of ergosterol biosynthesis pathway that includes the middle steps of the pathway. ERG8 converts 5-phosphomevalonate to 5-diphosphomevalonate. The second module is carried out in the vacuole and involves the formation of farnesyl diphosphate, which is also an important intermediate in the biosynthesis of ubiquinone, dolichol, heme and prenylated proteins. Activity by the mevalonate kinase ERG12 first converts mevalonate into 5-phosphomevalonate. 5-phosphomevalonate is then further converted to 5-diphosphomevalonate by the phosphomevalonate kinase ERG8. The diphosphomevalonate decarboxylase MVD then produces isopentenyl diphosphate. The isopentenyl-diphosphate delta-isomerase IDI1 then catalyzes the 1,3-allylic rearrangement of the homoallylic substrate isopentenyl (IPP) to its highly electrophilic allylic isomer, dimethylallyl diphosphate (DMAPP). Finally the farnesyl diphosphate synthase ERG20 catalyzes the sequential condensation of isopentenyl pyrophosphate with dimethylallyl pyrophosphate, and then with the resultant geranylpyrophosphate to the ultimate product farnesyl pyrophosphate. The polypeptide is Phosphomevalonate kinase (Candida albicans (strain SC5314 / ATCC MYA-2876) (Yeast)).